A 481-amino-acid chain; its full sequence is UDP-N-acetylmuramoylalanine--D-glutamate ligase (481 aa).

108 to 114 (GTNGKTS) lines the ATP pocket.

The protein belongs to the MurCDEF family.

It localises to the cytoplasm. The catalysed reaction is UDP-N-acetyl-alpha-D-muramoyl-L-alanine + D-glutamate + ATP = UDP-N-acetyl-alpha-D-muramoyl-L-alanyl-D-glutamate + ADP + phosphate + H(+). Its pathway is cell wall biogenesis; peptidoglycan biosynthesis. Its function is as follows. Cell wall formation. Catalyzes the addition of glutamate to the nucleotide precursor UDP-N-acetylmuramoyl-L-alanine (UMA). In Bifidobacterium longum subsp. infantis (strain ATCC 15697 / DSM 20088 / JCM 1222 / NCTC 11817 / S12), this protein is UDP-N-acetylmuramoylalanine--D-glutamate ligase.